Here is a 152-residue protein sequence, read N- to C-terminus: D-aminoacyl-tRNA deacylase (152 aa).

A Gly-cisPro motif, important for rejection of L-amino acids motif is present at residues 137–138 (GP).

Belongs to the DTD family. In terms of assembly, homodimer.

The protein localises to the cytoplasm. It catalyses the reaction glycyl-tRNA(Ala) + H2O = tRNA(Ala) + glycine + H(+). The enzyme catalyses a D-aminoacyl-tRNA + H2O = a tRNA + a D-alpha-amino acid + H(+). Its function is as follows. An aminoacyl-tRNA editing enzyme that deacylates mischarged D-aminoacyl-tRNAs. Also deacylates mischarged glycyl-tRNA(Ala), protecting cells against glycine mischarging by AlaRS. Acts via tRNA-based rather than protein-based catalysis; rejects L-amino acids rather than detecting D-amino acids in the active site. By recycling D-aminoacyl-tRNA to D-amino acids and free tRNA molecules, this enzyme counteracts the toxicity associated with the formation of D-aminoacyl-tRNA entities in vivo and helps enforce protein L-homochirality. The chain is D-aminoacyl-tRNA deacylase from Methylibium petroleiphilum (strain ATCC BAA-1232 / LMG 22953 / PM1).